The primary structure comprises 179 residues: Acireductone dioxygenase (179 aa).

The tract at residues 7–26 is disordered; it reads MDDAPGDPRQPHRPDPGRPV. His-88, His-90, Glu-94, and His-133 together coordinate Fe(2+). Positions 88, 90, 94, and 133 each coordinate Ni(2+).

Belongs to the acireductone dioxygenase (ARD) family. Monomer. Interacts with MMP14. Requires Fe(2+) as cofactor. The cofactor is Ni(2+). Detected in heart, colon, lung, stomach, brain, spleen, liver, skeletal muscle and kidney.

It is found in the cytoplasm. The protein localises to the nucleus. The protein resides in the cell membrane. The catalysed reaction is 1,2-dihydroxy-5-(methylsulfanyl)pent-1-en-3-one + O2 = 4-methylsulfanyl-2-oxobutanoate + formate + 2 H(+). It catalyses the reaction 1,2-dihydroxy-5-(methylsulfanyl)pent-1-en-3-one + O2 = 3-(methylsulfanyl)propanoate + CO + formate + 2 H(+). It participates in amino-acid biosynthesis; L-methionine biosynthesis via salvage pathway; L-methionine from S-methyl-5-thio-alpha-D-ribose 1-phosphate: step 5/6. Catalyzes 2 different reactions between oxygen and the acireductone 1,2-dihydroxy-3-keto-5-methylthiopentene (DHK-MTPene) depending upon the metal bound in the active site. Fe-containing acireductone dioxygenase (Fe-ARD) produces formate and 2-keto-4-methylthiobutyrate (KMTB), the alpha-ketoacid precursor of methionine in the methionine recycle pathway. Ni-containing acireductone dioxygenase (Ni-ARD) produces methylthiopropionate, carbon monoxide and formate, and does not lie on the methionine recycle pathway. Also down-regulates cell migration mediated by MMP14. Necessary for hepatitis C virus replication in an otherwise non-permissive cell line. The chain is Acireductone dioxygenase from Homo sapiens (Human).